Reading from the N-terminus, the 730-residue chain is Stonin-1 (730 aa).

Disordered regions lie at residues 1–26 (MYSTNPGSWVTFDDDPAFQSSQKRKD), 38–83 (NGLK…PLST), and 132–159 (SPHVSLPSSHSHTQPTPTLGFTEDAGPQ). Composition is skewed to low complexity over residues 54–65 (PSSASSTPLSSP) and 132–143 (SPHVSLPSSHSH). Residues 269-402 (GWSFMLRIPE…KLPATAKPKN (134 aa)) enclose the SHD domain. Residues 407 to 710 (EQEICLDIQD…ACYNIQVEIE (304 aa)) form the MHD domain.

This sequence belongs to the Stoned B family.

The protein resides in the cytoplasm. Its subcellular location is the membrane. Its function is as follows. May be involved in the endocytic machinery. The chain is Stonin-1 (Ston1) from Mus musculus (Mouse).